The following is a 107-amino-acid chain: Ubiquitin-related modifier 1 (107 aa).

1-thioglycine is present on G107. G107 participates in a covalent cross-link: Glycyl lysine isopeptide (Gly-Lys) (interchain with K-? in acceptor proteins).

This sequence belongs to the URM1 family. Post-translationally, C-terminal thiocarboxylation occurs in 2 steps, it is first acyl-adenylated (-COAMP) via the hesA/moeB/thiF part of UBA4, then thiocarboxylated (-COSH) via the rhodanese domain of UBA4.

The protein localises to the cytoplasm. It participates in tRNA modification; 5-methoxycarbonylmethyl-2-thiouridine-tRNA biosynthesis. Its function is as follows. Acts as a sulfur carrier required for 2-thiolation of mcm(5)S(2)U at tRNA wobble positions of cytosolic tRNA(Lys), tRNA(Glu) and tRNA(Gln). Serves as sulfur donor in tRNA 2-thiolation reaction by being thiocarboxylated (-COSH) at its C-terminus by the MOCS3 homolog UBA4. The sulfur is then transferred to tRNA to form 2-thiolation of mcm(5)S(2)U. Prior mcm(5) tRNA modification by the elongator complex is required for 2-thiolation. Also acts as a ubiquitin-like protein (UBL) that is covalently conjugated via an isopeptide bond to lysine residues of target proteins such as AHP1. The thiocarboxylated form serves as substrate for conjugation and oxidative stress specifically induces the formation of UBL-protein conjugates. The polypeptide is Ubiquitin-related modifier 1 (Mycosarcoma maydis (Corn smut fungus)).